The sequence spans 258 residues: UPF0246 protein YaaA (258 aa).

Belongs to the UPF0246 family.

This Escherichia coli O45:K1 (strain S88 / ExPEC) protein is UPF0246 protein YaaA.